The following is a 117-amino-acid chain: Large ribosomal subunit protein bL19 (117 aa).

Belongs to the bacterial ribosomal protein bL19 family.

Functionally, this protein is located at the 30S-50S ribosomal subunit interface and may play a role in the structure and function of the aminoacyl-tRNA binding site. The polypeptide is Large ribosomal subunit protein bL19 (Shewanella halifaxensis (strain HAW-EB4)).